A 196-amino-acid chain; its full sequence is Putative 3-methyladenine DNA glycosylase (196 aa).

The protein belongs to the DNA glycosylase MPG family.

This is Putative 3-methyladenine DNA glycosylase from Chlorobium phaeobacteroides (strain DSM 266 / SMG 266 / 2430).